A 775-amino-acid chain; its full sequence is Rab3 GTPase-activating protein catalytic subunit (775 aa).

5 positions are modified to phosphoserine: Ser173, Ser330, Ser373, Ser375, and Ser384. The interval 324–351 (DEGKKTSPSDSMTKAYPADAGKAGGQLG) is disordered. A disordered region spans residues 386–414 (AEDLRGNGQESTKKGGPKDMAPLKPEGRL). Ser458 is subject to Phosphoserine.

Belongs to the Rab3-GAP catalytic subunit family. As to quaternary structure, the Rab3 GTPase-activating complex is a heterodimer composed of Rab3gap1 and Rab3gap2. The Rab3 GTPase-activating complex interacts with DMXL2. Interacts with LMAN1.

Its subcellular location is the cytoplasm. The protein resides in the endoplasmic reticulum. It is found in the golgi apparatus. It localises to the cis-Golgi network. Catalytic subunit of the Rab3 GTPase-activating (Rab3GAP) complex composed of RAB3GAP1 and RAB3GAP2, which has GTPase-activating protein (GAP) activity towards various Rab3 subfamily members (RAB3A, RAB3B, RAB3C and RAB3D), RAB5A and RAB43, and guanine nucleotide exchange factor (GEF) activity towards RAB18. As part of the Rab3GAP complex, acts as a GAP for Rab3 proteins by converting active RAB3-GTP to the inactive form RAB3-GDP. Rab3 proteins are involved in regulated exocytosis of neurotransmitters and hormones. The Rab3GAP complex, acts as a GEF for RAB18 by promoting the conversion of inactive RAB18-GDP to the active form RAB18-GTP. Recruits and stabilizes RAB18 at the cis-Golgi membrane where RAB18 is most likely activated. Also involved in RAB18 recruitment at the endoplasmic reticulum (ER) membrane where it maintains proper ER structure. Required for normal eye and brain development. May participate in neurodevelopmental processes such as proliferation, migration and differentiation before synapse formation, and non-synaptic vesicular release of neurotransmitters. In Rattus norvegicus (Rat), this protein is Rab3 GTPase-activating protein catalytic subunit.